Reading from the N-terminus, the 85-residue chain is Small ribosomal subunit protein bS16 (85 aa).

Belongs to the bacterial ribosomal protein bS16 family.

This is Small ribosomal subunit protein bS16 from Clostridium kluyveri (strain NBRC 12016).